The chain runs to 220 residues: Kinetochore protein Spc25 (220 aa).

Residues 41 to 119 adopt a coiled-coil conformation; it reads ILLDVKEAAA…NEIMERIHTL (79 aa).

The protein belongs to the SPC25 family. Component of the Ndc80 complex, which is composed of Ndc80, Nuf2 and Spc25.

The protein localises to the nucleus. Its subcellular location is the chromosome. The protein resides in the centromere. It is found in the kinetochore. Its function is as follows. Acts as a component of the essential kinetochore-associated Ndc80 complex, which is required for chromosome segregation and spindle checkpoint activity during meiosis and mitosis. Required for kinetochore integrity and the organization of stable microtubule binding sites in the outer plate of the kinetochore. Participates in SAC signaling that responds specifically to disruptions in spindle microtubule dynamics. The NDC80 complex synergistically enhances the affinity of the SKA1 complex for microtubules and may allow the NDC80 complex to track depolymerizing microtubules. This Drosophila erecta (Fruit fly) protein is Kinetochore protein Spc25.